The following is a 485-amino-acid chain: Pelle-like serine/threonine-protein kinase pik-1 (485 aa).

The span at 115–132 (TSRVSKQMVQPPGSQSAS) shows a compositional bias: polar residues. The tract at residues 115–155 (TSRVSKQMVQPPGSQSASRLKKTEIKESSPSPAAAAASQLS) is disordered. Positions 142 to 152 (SSPSPAAAAAS) are enriched in low complexity. One can recognise a Protein kinase domain in the interval 185–485 (FAVSNVIGKG…LCKNSIPPVV (301 aa)). ATP contacts are provided by residues 191–199 (IGKGGYGTV) and K214. Residue D318 is the Proton acceptor of the active site.

This sequence belongs to the protein kinase superfamily. TKL Ser/Thr protein kinase family. Pelle subfamily. In terms of assembly, interacts with actl-1. Expressed in the nervous system.

It catalyses the reaction L-seryl-[protein] + ATP = O-phospho-L-seryl-[protein] + ADP + H(+). The catalysed reaction is L-threonyl-[protein] + ATP = O-phospho-L-threonyl-[protein] + ADP + H(+). In terms of biological role, through association with the adapter actl-1, may act downstream of the receptor complex composed of ilcr-1 and ilcr-2, which is a signaling complex that modulates neuronal activity and animal behavior in response to sensory neuron input. This is Pelle-like serine/threonine-protein kinase pik-1 from Caenorhabditis elegans.